The following is a 199-amino-acid chain: GTP cyclohydrolase-2 (199 aa).

Position 49–53 (arginine 49–glutamate 53) interacts with GTP. 3 residues coordinate Zn(2+): cysteine 54, cysteine 65, and cysteine 67. GTP-binding positions include glutamine 70, glutamate 92–arginine 94, and threonine 114. Aspartate 126 (proton acceptor) is an active-site residue. The active-site Nucleophile is the arginine 128. Residues threonine 149 and lysine 154 each contribute to the GTP site.

It belongs to the GTP cyclohydrolase II family. Homodimer. Zn(2+) serves as cofactor.

The enzyme catalyses GTP + 4 H2O = 2,5-diamino-6-hydroxy-4-(5-phosphoribosylamino)-pyrimidine + formate + 2 phosphate + 3 H(+). It functions in the pathway cofactor biosynthesis; riboflavin biosynthesis; 5-amino-6-(D-ribitylamino)uracil from GTP: step 1/4. Functionally, catalyzes the conversion of GTP to 2,5-diamino-6-ribosylamino-4(3H)-pyrimidinone 5'-phosphate (DARP), formate and pyrophosphate. The polypeptide is GTP cyclohydrolase-2 (Proteus mirabilis (strain HI4320)).